The chain runs to 148 residues: RQNYFLSFKQVLLVGGPTLYMPARPWFCPMMSPSMPGAPSAGPMSDSNSKGSTPRSPARPTVSTGPPMDDLAASMERCSLDCMSPRPAPKGPDDSGSTAPFRPFALSPARFHFPPSSGPPSSPTNANCPRPLATVAPLSGTAFFPGTT.

The segment covering 36–45 (PGAPSAGPMS) has biased composition (low complexity). Positions 36–148 (PGAPSAGPMS…SGTAFFPGTT (113 aa)) are disordered. Polar residues predominate over residues 46–55 (DSNSKGSTPR).

This is an uncharacterized protein from Bovine leukemia virus (isolate Japanese BLV-1) (BLV).